The primary structure comprises 353 residues: Histidinol-phosphate aminotransferase 1 (353 aa).

Residue K211 is modified to N6-(pyridoxal phosphate)lysine.

Belongs to the class-II pyridoxal-phosphate-dependent aminotransferase family. Histidinol-phosphate aminotransferase subfamily. In terms of assembly, homodimer. Requires pyridoxal 5'-phosphate as cofactor.

The enzyme catalyses L-histidinol phosphate + 2-oxoglutarate = 3-(imidazol-4-yl)-2-oxopropyl phosphate + L-glutamate. The protein operates within amino-acid biosynthesis; L-histidine biosynthesis; L-histidine from 5-phospho-alpha-D-ribose 1-diphosphate: step 7/9. The polypeptide is Histidinol-phosphate aminotransferase 1 (hisC1) (Nostoc sp. (strain PCC 7120 / SAG 25.82 / UTEX 2576)).